Here is a 626-residue protein sequence, read N- to C-terminus: Chaperone protein DnaK (626 aa).

T175 bears the Phosphothreonine; by autocatalysis mark. A compositionally biased stretch (low complexity) spans 586-606 (GAEGAAAGADGAGASAGSASG). Positions 586-626 (GAEGAAAGADGAGASAGSASGSDDDTVEAEVVDDDDDKDNK) are disordered. Residues 607–626 (SDDDTVEAEVVDDDDDKDNK) show a composition bias toward acidic residues.

This sequence belongs to the heat shock protein 70 family.

Its function is as follows. Acts as a chaperone. The chain is Chaperone protein DnaK from Bifidobacterium longum (strain DJO10A).